The sequence spans 371 residues: Chaperone protein DnaJ (371 aa).

The J domain occupies 5 to 70 (CYYEILNVSK…SKRSRYDQFG (66 aa)). The CR-type zinc finger occupies 127-204 (GVEKEITIPR…CYGNGKVKKQ (78 aa)). The Zn(2+) site is built by cysteine 140, cysteine 143, cysteine 156, cysteine 159, cysteine 178, cysteine 181, cysteine 192, and cysteine 195. CXXCXGXG motif repeat units lie at residues 140–147 (CDSCDGTG), 156–163 (CHACHGQG), 178–185 (CPVCNGTG), and 192–199 (CDACYGNG).

It belongs to the DnaJ family. As to quaternary structure, homodimer. The cofactor is Zn(2+).

It localises to the cytoplasm. Functionally, participates actively in the response to hyperosmotic and heat shock by preventing the aggregation of stress-denatured proteins and by disaggregating proteins, also in an autonomous, DnaK-independent fashion. Unfolded proteins bind initially to DnaJ; upon interaction with the DnaJ-bound protein, DnaK hydrolyzes its bound ATP, resulting in the formation of a stable complex. GrpE releases ADP from DnaK; ATP binding to DnaK triggers the release of the substrate protein, thus completing the reaction cycle. Several rounds of ATP-dependent interactions between DnaJ, DnaK and GrpE are required for fully efficient folding. Also involved, together with DnaK and GrpE, in the DNA replication of plasmids through activation of initiation proteins. In Francisella tularensis subsp. tularensis (strain WY96-3418), this protein is Chaperone protein DnaJ.